The following is a 444-amino-acid chain: Homogentisate 1,2-dioxygenase (444 aa).

H298 acts as the Proton acceptor in catalysis. Residues H341 and E347 each contribute to the Fe cation site. The homogentisate site is built by Y356 and H377. H377 is a binding site for Fe cation.

Belongs to the homogentisate dioxygenase family. In terms of assembly, hexamer; dimer of trimers. Fe cation serves as cofactor.

It catalyses the reaction homogentisate + O2 = 4-maleylacetoacetate + H(+). The protein operates within amino-acid degradation; L-phenylalanine degradation; acetoacetate and fumarate from L-phenylalanine: step 4/6. In terms of biological role, involved in the catabolism of homogentisate (2,5-dihydroxyphenylacetate or 2,5-OH-PhAc), a central intermediate in the degradation of phenylalanine and tyrosine. Catalyzes the oxidative ring cleavage of the aromatic ring of homogentisate to yield maleylacetoacetate. This Burkholderia ambifaria (strain MC40-6) protein is Homogentisate 1,2-dioxygenase.